The primary structure comprises 193 residues: MLENLKKYKIVLASNSPRRRNLLSGLDIDFEVRVISDIDESYPDSIDSMEIPLYIARSKAEAYKPTMADDELLITADTIVWTFDGVMGKPANREEAYAMLHALSDHVHQVITGVCIMTKDKNVGFSVESAVCFAKLGDEEINYYLDKYKPYDKAGGYGIQEWIGYIGVEAINGSFYNVMGLPVQKLYQELKHF.

D77 serves as the catalytic Proton acceptor.

This sequence belongs to the Maf family. YhdE subfamily. The cofactor is a divalent metal cation.

The protein localises to the cytoplasm. The enzyme catalyses dTTP + H2O = dTMP + diphosphate + H(+). The catalysed reaction is UTP + H2O = UMP + diphosphate + H(+). In terms of biological role, nucleoside triphosphate pyrophosphatase that hydrolyzes dTTP and UTP. May have a dual role in cell division arrest and in preventing the incorporation of modified nucleotides into cellular nucleic acids. This Parabacteroides distasonis (strain ATCC 8503 / DSM 20701 / CIP 104284 / JCM 5825 / NCTC 11152) protein is dTTP/UTP pyrophosphatase.